The primary structure comprises 702 residues: Methionine--tRNA ligase (702 aa).

The 'HIGH' region motif lies at 14–24 (PYANGPVHLGH). Residues C146, C149, C159, and C162 each coordinate Zn(2+). The 'KMSKS' region motif lies at 344–348 (KFSKS). K347 contributes to the ATP binding site. Positions 601 to 702 (DFQKVDLRAA…GEKINGSSVQ (102 aa)) constitute a tRNA-binding domain.

It belongs to the class-I aminoacyl-tRNA synthetase family. MetG type 1 subfamily. As to quaternary structure, homodimer. Zn(2+) serves as cofactor.

The protein resides in the cytoplasm. The catalysed reaction is tRNA(Met) + L-methionine + ATP = L-methionyl-tRNA(Met) + AMP + diphosphate. Functionally, is required not only for elongation of protein synthesis but also for the initiation of all mRNA translation through initiator tRNA(fMet) aminoacylation. This chain is Methionine--tRNA ligase, found in Chlorobium phaeovibrioides (strain DSM 265 / 1930) (Prosthecochloris vibrioformis (strain DSM 265)).